Here is a 541-residue protein sequence, read N- to C-terminus: Eukaryotic translation initiation factor 3 subunit E (541 aa).

Positions 252 to 443 constitute a PCI domain; the sequence is VEMFLSPVYL…GMVFMNPTHP (192 aa). The tract at residues 466–541 is disordered; sequence AIDRKAHPPS…QQPAQAIAAN (76 aa). A compositionally biased stretch (gly residues) spans 490–502; sequence NAGGRGGRGGQRN. Residues 506 to 522 are compositionally biased toward basic and acidic residues; the sequence is QRDRSHAHNNEAKREGE. Residues 523-541 are compositionally biased toward low complexity; it reads SASAEEAQQQQPAQAIAAN.

The protein belongs to the eIF-3 subunit E family. As to quaternary structure, component of the eukaryotic translation initiation factor 3 (eIF-3) complex.

Its subcellular location is the cytoplasm. Its function is as follows. Component of the eukaryotic translation initiation factor 3 (eIF-3) complex, which is involved in protein synthesis of a specialized repertoire of mRNAs and, together with other initiation factors, stimulates binding of mRNA and methionyl-tRNAi to the 40S ribosome. The eIF-3 complex specifically targets and initiates translation of a subset of mRNAs involved in cell proliferation. The polypeptide is Eukaryotic translation initiation factor 3 subunit E (Mycosarcoma maydis (Corn smut fungus)).